The chain runs to 317 residues: AT-hook motif nuclear-localized protein 22 (317 aa).

Disordered regions lie at residues 22-41 and 48-106; these read HHQFQHQQQQQQQNHGHDID and LKRD…KPPI. Residues 26–35 show a composition bias toward low complexity; the sequence is QHQQQQQQQN. The span at 48 to 64 shows a compositional bias: basic and acidic residues; it reads LKRDRDADIDPNEHSSA. Positions 72 to 84 are enriched in gly residues; sequence GSGGESGGGGGGD. The a.T hook DNA-binding region spans 89 to 101; that stretch reads RRPRGRPAGSKNK. A PPC domain is found at 113-253; sequence ANALKSHVME…EDDQEEQTAG (141 aa). Residues 258–285 are disordered; that stretch reads NIDGNATMGGGTQTQTQTQQQQQQQLMQ. The segment covering 270–282 has biased composition (low complexity); sequence QTQTQTQQQQQQQ.

As to quaternary structure, homodimer. Interacts with HDA1/HDA19, HDA6 and HDA9. As to expression, expressed at the hypocotyl-root transition zone and the root hair zone. Also detected in the inflorescence.

It is found in the nucleus. Transcription factor that specifically binds AT-rich DNA sequences related to the nuclear matrix attachment regions (MARs). Binds an AT-rich DNA sequences in the FLOWERING LOCUS T (FT) promoter. Acts redundantly with AHL18, AHL27 and AHL29 in the regulation of flowering and regulation of the hypocotyl elongation. Plays a role in both photo- and skotomorphogenesis. Acts as a chromatin remodeling factor that modifies the architecture of FLOWERING LOCUS T (FT) chromatin by modulating both H3 acetylation and methylation leading to the regulation of FT expression during flowering induction. This is AT-hook motif nuclear-localized protein 22 from Arabidopsis thaliana (Mouse-ear cress).